We begin with the raw amino-acid sequence, 72 residues long: Small ribosomal subunit protein bS18c (72 aa).

Belongs to the bacterial ribosomal protein bS18 family. Part of the 30S ribosomal subunit.

Its subcellular location is the plastid. The protein localises to the chloroplast. The sequence is that of Small ribosomal subunit protein bS18c from Thalassiosira pseudonana (Marine diatom).